A 403-amino-acid chain; its full sequence is Betaine--homocysteine S-methyltransferase 1 (403 aa).

The Hcy-binding domain occupies 8-311 (KGLLERLDAG…YHTRAIAEEL (304 aa)). Zn(2+) is bound by residues cysteine 214, cysteine 296, and cysteine 297.

In terms of assembly, homotetramer. Requires Zn(2+) as cofactor.

The protein resides in the cytoplasm. It carries out the reaction L-homocysteine + glycine betaine = N,N-dimethylglycine + L-methionine. The protein operates within amine and polyamine degradation; betaine degradation; sarcosine from betaine: step 1/2. It functions in the pathway amino-acid biosynthesis; L-methionine biosynthesis via de novo pathway; L-methionine from L-homocysteine (BhmT route): step 1/1. Functionally, involved in the regulation of homocysteine metabolism. Converts betaine and homocysteine to dimethylglycine and methionine, respectively. This reaction is also required for the irreversible oxidation of choline. The chain is Betaine--homocysteine S-methyltransferase 1 (bhmt) from Xenopus tropicalis (Western clawed frog).